The primary structure comprises 1594 residues: Mediator of RNA polymerase II transcription subunit 12 (1594 aa).

2 disordered regions span residues 1–116 and 1499–1532; these read MIPH…LSWR and PSPAAGGSTPTPTPSSALPGAPSNPQPTAMTPAV. Low complexity-rich tracts occupy residues 81–93 and 1499–1521; these read PAAPSARDASPAP and PSPAAGGSTPTPTPSSALPGAPS.

It belongs to the Mediator complex subunit 12 family. In terms of assembly, component of the srb8-11 complex, which itself associates with the Mediator complex.

It is found in the nucleus. Component of the srb8-11 complex. The srb8-11 complex is a regulatory module of the Mediator complex which is itself involved in regulation of basal and activated RNA polymerase II-dependent transcription. The srb8-11 complex may be involved in the transcriptional repression of a subset of genes regulated by Mediator. It may inhibit the association of the Mediator complex with RNA polymerase II to form the holoenzyme complex. The chain is Mediator of RNA polymerase II transcription subunit 12 (srb8) from Aspergillus oryzae (strain ATCC 42149 / RIB 40) (Yellow koji mold).